Reading from the N-terminus, the 191-residue chain is Fe/S biogenesis protein NfuA (191 aa).

[4Fe-4S] cluster-binding residues include C149 and C152.

The protein belongs to the NfuA family. In terms of assembly, homodimer. [4Fe-4S] cluster serves as cofactor.

In terms of biological role, involved in iron-sulfur cluster biogenesis. Binds a 4Fe-4S cluster, can transfer this cluster to apoproteins, and thereby intervenes in the maturation of Fe/S proteins. Could also act as a scaffold/chaperone for damaged Fe/S proteins. This chain is Fe/S biogenesis protein NfuA, found in Citrobacter koseri (strain ATCC BAA-895 / CDC 4225-83 / SGSC4696).